We begin with the raw amino-acid sequence, 370 residues long: Ganglioside-induced differentiation-associated protein 1-like 1 (370 aa).

In terms of domain architecture, GST N-terminal spans 45 to 129 (ESLVLYHWTQ…YVERTFTGEH (85 aa)). The region spanning 177-344 (PKYATAEIRR…RLVKRKPPSF (168 aa)) is the GST C-terminal domain.

Belongs to the GST superfamily.

This is Ganglioside-induced differentiation-associated protein 1-like 1 (Gdap1l1) from Mus musculus (Mouse).